A 544-amino-acid chain; its full sequence is Glutamyl-tRNA(Gln) amidotransferase subunit B, chloroplastic/mitochondrial (544 aa).

Belongs to the GatB/GatE family. GatB subfamily. In terms of assembly, subunit of the heterotrimeric GatCAB amidotransferase (AdT) complex, composed of A, B and C subunits.

The protein localises to the mitochondrion. It localises to the plastid. Its subcellular location is the chloroplast. It catalyses the reaction L-glutamyl-tRNA(Gln) + L-glutamine + ATP + H2O = L-glutaminyl-tRNA(Gln) + L-glutamate + ADP + phosphate + H(+). Functionally, allows the formation of correctly charged Gln-tRNA(Gln) through the transamidation of misacylated Glu-tRNA(Gln) in chloroplasts and mitochondria. The reaction takes place in the presence of glutamine and ATP through an activated gamma-phospho-Glu-tRNA(Gln). This chain is Glutamyl-tRNA(Gln) amidotransferase subunit B, chloroplastic/mitochondrial, found in Oryza sativa subsp. japonica (Rice).